The chain runs to 197 residues: UDP-N-acetylglucosamine transferase subunit alg13 (197 aa).

The tract at residues 174 to 197 (VRGPDQKNQPTLEQVMSDEMGFVD) is disordered.

Belongs to the glycosyltransferase 28 family. As to quaternary structure, heterodimer with alg14 to form a functional enzyme.

The protein localises to the endoplasmic reticulum. The catalysed reaction is an N-acetyl-alpha-D-glucosaminyl-diphospho-di-trans,poly-cis-dolichol + UDP-N-acetyl-alpha-D-glucosamine = an N,N'-diacetylchitobiosyl-diphospho-di-trans,poly-cis-dolichol + UDP + H(+). In terms of biological role, involved in protein N-glycosylation. Essential for the second step of the dolichol-linked oligosaccharide pathway. This is UDP-N-acetylglucosamine transferase subunit alg13 (alg13) from Aspergillus fumigatus (strain ATCC MYA-4609 / CBS 101355 / FGSC A1100 / Af293) (Neosartorya fumigata).